Consider the following 424-residue polypeptide: Kynureninase (424 aa).

Pyridoxal 5'-phosphate contacts are provided by residues leucine 106, threonine 107, 134-137 (FPSD), aspartate 219, histidine 222, and tyrosine 244. Lysine 245 carries the N6-(pyridoxal phosphate)lysine modification. The pyridoxal 5'-phosphate site is built by tryptophan 274 and asparagine 302.

It belongs to the kynureninase family. In terms of assembly, homodimer. Pyridoxal 5'-phosphate serves as cofactor.

The catalysed reaction is L-kynurenine + H2O = anthranilate + L-alanine + H(+). It catalyses the reaction 3-hydroxy-L-kynurenine + H2O = 3-hydroxyanthranilate + L-alanine + H(+). It participates in amino-acid degradation; L-kynurenine degradation; L-alanine and anthranilate from L-kynurenine: step 1/1. The protein operates within cofactor biosynthesis; NAD(+) biosynthesis; quinolinate from L-kynurenine: step 2/3. Its function is as follows. Catalyzes the cleavage of L-kynurenine (L-Kyn) and L-3-hydroxykynurenine (L-3OHKyn) into anthranilic acid (AA) and 3-hydroxyanthranilic acid (3-OHAA), respectively. The sequence is that of Kynureninase from Xanthomonas campestris pv. campestris (strain 8004).